The primary structure comprises 80 residues: UPF0270 protein AHA_0994 (80 aa).

It belongs to the UPF0270 family.

This is UPF0270 protein AHA_0994 from Aeromonas hydrophila subsp. hydrophila (strain ATCC 7966 / DSM 30187 / BCRC 13018 / CCUG 14551 / JCM 1027 / KCTC 2358 / NCIMB 9240 / NCTC 8049).